The primary structure comprises 132 residues: Small ribosomal subunit protein uS8 (132 aa).

Belongs to the universal ribosomal protein uS8 family. As to quaternary structure, part of the 30S ribosomal subunit. Contacts proteins S5 and S12.

One of the primary rRNA binding proteins, it binds directly to 16S rRNA central domain where it helps coordinate assembly of the platform of the 30S subunit. This chain is Small ribosomal subunit protein uS8, found in Alkaliphilus metalliredigens (strain QYMF).